The primary structure comprises 400 residues: Elongation factor Tu 1 (400 aa).

The tr-type G domain occupies 10–209 (KPHVNIGTIG…AVDEYIPTPQ (200 aa)). The tract at residues 19–26 (GHVDHGKT) is G1. 19-26 (GHVDHGKT) contacts GTP. A Mg(2+)-binding site is contributed by threonine 26. Residues 60–64 (GITIN) are G2. Residues 81–84 (DCPG) are G3. Residues 81–85 (DCPGH) and 136–139 (NKAD) contribute to the GTP site. The segment at 136–139 (NKAD) is G4. The tract at residues 174–176 (SAL) is G5.

The protein belongs to the TRAFAC class translation factor GTPase superfamily. Classic translation factor GTPase family. EF-Tu/EF-1A subfamily. In terms of assembly, monomer.

The protein localises to the cytoplasm. It catalyses the reaction GTP + H2O = GDP + phosphate + H(+). In terms of biological role, GTP hydrolase that promotes the GTP-dependent binding of aminoacyl-tRNA to the A-site of ribosomes during protein biosynthesis. The sequence is that of Elongation factor Tu 1 from Pelotomaculum thermopropionicum (strain DSM 13744 / JCM 10971 / SI).